We begin with the raw amino-acid sequence, 246 residues long: ATP synthase subunit a (246 aa).

Positions 1 to 3 are cleaved as a propeptide — removed in mature form; that stretch reads MIY. 7 helical membrane passes run 25–45, 51–71, 79–99, 112–132, 138–158, 178–198, and 203–223; these read VNNY…SVFL, LGFN…LNMV, GGMY…ANLV, LVAI…MGLS, FFAL…LVLI, VLSG…LMGS, and FMGG…EFAI.

The protein belongs to the ATPase A chain family. As to quaternary structure, F-type ATPases have 2 components, CF(1) - the catalytic core - and CF(0) - the membrane proton channel. CF(1) has five subunits: alpha(3), beta(3), gamma(1), delta(1), epsilon(1). CF(0) has three main subunits: a, b and c.

It is found in the mitochondrion inner membrane. Mitochondrial membrane ATP synthase (F(1)F(0) ATP synthase or Complex V) produces ATP from ADP in the presence of a proton gradient across the membrane which is generated by electron transport complexes of the respiratory chain. F-type ATPases consist of two structural domains, F(1) - containing the extramembraneous catalytic core and F(0) - containing the membrane proton channel, linked together by a central stalk and a peripheral stalk. During catalysis, ATP synthesis in the catalytic domain of F(1) is coupled via a rotary mechanism of the central stalk subunits to proton translocation. Key component of the proton channel; it may play a direct role in the translocation of protons across the membrane. The chain is ATP synthase subunit a (ATP6) from Debaryomyces hansenii (strain ATCC 36239 / CBS 767 / BCRC 21394 / JCM 1990 / NBRC 0083 / IGC 2968) (Yeast).